The following is a 336-amino-acid chain: tRNA N6-adenosine threonylcarbamoyltransferase (336 aa).

Fe cation contacts are provided by His111 and His115. Substrate is bound by residues 134–138, Asp167, Gly180, and Asn271; that span reads LVSGG. Asp299 contacts Fe cation.

Belongs to the KAE1 / TsaD family. It depends on Fe(2+) as a cofactor.

Its subcellular location is the cytoplasm. It catalyses the reaction L-threonylcarbamoyladenylate + adenosine(37) in tRNA = N(6)-L-threonylcarbamoyladenosine(37) in tRNA + AMP + H(+). Required for the formation of a threonylcarbamoyl group on adenosine at position 37 (t(6)A37) in tRNAs that read codons beginning with adenine. Is involved in the transfer of the threonylcarbamoyl moiety of threonylcarbamoyl-AMP (TC-AMP) to the N6 group of A37, together with TsaE and TsaB. TsaD likely plays a direct catalytic role in this reaction. In Thioalkalivibrio sulfidiphilus (strain HL-EbGR7), this protein is tRNA N6-adenosine threonylcarbamoyltransferase.